We begin with the raw amino-acid sequence, 336 residues long: Aspartate--ammonia ligase (336 aa).

Belongs to the class-II aminoacyl-tRNA synthetase family. AsnA subfamily.

It localises to the cytoplasm. It carries out the reaction L-aspartate + NH4(+) + ATP = L-asparagine + AMP + diphosphate + H(+). Its pathway is amino-acid biosynthesis; L-asparagine biosynthesis; L-asparagine from L-aspartate (ammonia route): step 1/1. This Limosilactobacillus reuteri (strain DSM 20016) (Lactobacillus reuteri) protein is Aspartate--ammonia ligase.